The primary structure comprises 341 residues: Dehydration-responsive element-binding protein 2C (341 aa).

The Nuclear localization signal signature appears at 8 to 48 (RKRKSRGTRDVAEILRQWREYNEQIEAESCIDGGGPKSIRK). The disordered stretch occupies residues 36–63 (SCIDGGGPKSIRKPPPKGSRKGCMKGKG). Positions 45 to 59 (SIRKPPPKGSRKGCM) are enriched in basic residues. Positions 71–128 (DYRGVRQRRWGKWVAEIREPDGGARLWLGTFSSSYEAALAYDEAAKAIYGQSARLNLP) form a DNA-binding region, AP2/ERF.

This sequence belongs to the AP2/ERF transcription factor family. ERF subfamily.

It localises to the nucleus. In terms of biological role, transcriptional activator that binds specifically to the DNA sequence 5'-[AG]CCGAC-3'. Binding to the C-repeat/DRE element mediates high salinity- and abscisic acid-inducible transcription. This chain is Dehydration-responsive element-binding protein 2C (DREB2C), found in Arabidopsis thaliana (Mouse-ear cress).